The chain runs to 292 residues: tRNA-splicing endonuclease (292 aa).

Active-site residues include tyrosine 231, histidine 238, and lysine 267.

Belongs to the tRNA-intron endonuclease family. Archaeal long subfamily. In terms of assembly, homodimer.

The enzyme catalyses pretRNA = a 3'-half-tRNA molecule with a 5'-OH end + a 5'-half-tRNA molecule with a 2',3'-cyclic phosphate end + an intron with a 2',3'-cyclic phosphate and a 5'-hydroxyl terminus.. In terms of biological role, endonuclease that removes tRNA introns. Cleaves pre-tRNA at the 5'- and 3'-splice sites to release the intron. The products are an intron and two tRNA half-molecules bearing 2',3' cyclic phosphate and 5'-OH termini. Recognizes a pseudosymmetric substrate in which 2 bulged loops of 3 bases are separated by a stem of 4 bp. The protein is tRNA-splicing endonuclease of Thermoplasma volcanium (strain ATCC 51530 / DSM 4299 / JCM 9571 / NBRC 15438 / GSS1).